Consider the following 152-residue polypeptide: Small ribosomal subunit protein bS6 (152 aa).

Residues 94–152 are disordered; sequence VKQEGPLPTPKPSNKSSTQSENKDNPETKVESKEEQSVTNSDTSTTKKDDNEIKENTES. Composition is skewed to basic and acidic residues over residues 114–129 and 138–152; these read ENKDNPETKVESKEEQ and TTKKDDNEIKENTES.

It belongs to the bacterial ribosomal protein bS6 family.

Its function is as follows. Binds together with bS18 to 16S ribosomal RNA. In Prochlorococcus marinus (strain MIT 9312), this protein is Small ribosomal subunit protein bS6.